The sequence spans 99 residues: Integration host factor subunit alpha (99 aa).

Residues 49-73 (FGNFDLRDKNQRPGRNPKTGEDIPI) are disordered.

Belongs to the bacterial histone-like protein family. As to quaternary structure, heterodimer of an alpha and a beta chain.

This protein is one of the two subunits of integration host factor, a specific DNA-binding protein that functions in genetic recombination as well as in transcriptional and translational control. The chain is Integration host factor subunit alpha (ihfA) from Serratia marcescens.